The primary structure comprises 267 residues: MNALLTNPFKERLRKGEVQIGLWLSSTTSYMAEIAATSGYDWLLIDGEHAPNTIQDLYHQLQAVAPYASQPVIRPVEGSKSLIKQVLDIGAQTLLIPMVDTADQARQVSSATRYPPYGERGVGASVARAARWGRIENYMAQVNDSLCLLVQVESKTALDNLDEILDVEGIDGVFIGPADLSASLGYPDNAGHPEVQRIIETSIRRIRAAGKAAGFLAVAPDMAQQCLAWGANFVAVGVDTMLYSDALDQRLAMFKSGKNGPRIKGSY.

The active-site Proton acceptor is H49. Position 151 (Q151) interacts with substrate. Position 153 (E153) interacts with Mg(2+). Residues A178 and D179 each coordinate substrate. D179 contacts Mg(2+).

The protein belongs to the HpcH/HpaI aldolase family. KDR aldolase subfamily. In terms of assembly, homohexamer. It depends on Mg(2+) as a cofactor.

The enzyme catalyses 2-dehydro-3-deoxy-L-rhamnonate = (S)-lactaldehyde + pyruvate. In terms of biological role, catalyzes the reversible retro-aldol cleavage of 2-keto-3-deoxy-L-rhamnonate (KDR) to pyruvate and lactaldehyde. In Shigella boydii serotype 4 (strain Sb227), this protein is 2-keto-3-deoxy-L-rhamnonate aldolase.